A 349-amino-acid chain; its full sequence is Bifunctional nitrilase/nitrile hydratase NIT4A (349 aa).

The CN hydrolase domain maps to 29-301; the sequence is VRATVVQAST…EALISADLDL (273 aa). Glu-69 (proton acceptor) is an active-site residue. Catalysis depends on Lys-156, which acts as the Proton donor. Residue Cys-190 is the Nucleophile of the active site.

The protein belongs to the carbon-nitrogen hydrolase superfamily. Nitrilase family. Expressed in roots, stems, cotyledons, leaves and flowers.

The protein resides in the cell membrane. It carries out the reaction a nitrile + 2 H2O = a carboxylate + NH4(+). The enzyme catalyses 3-cyano-L-alanine + 2 H2O = L-aspartate + NH4(+). It catalyses the reaction L-asparagine = 3-cyano-L-alanine + H2O. In terms of biological role, highly specific for beta-cyano-L-alanine (Ala(CN)). Low activity with 3-phenylpropionitrile (PPN). Not associated with auxin production but may be involved in cyanide detoxification. The chain is Bifunctional nitrilase/nitrile hydratase NIT4A (NIT4A) from Nicotiana tabacum (Common tobacco).